A 423-amino-acid polypeptide reads, in one-letter code: uncharacterized protein (423 aa).

Belongs to the asfivirus E423R family.

The protein resides in the virion. This is an uncharacterized protein from African swine fever virus (isolate Tick/Malawi/Lil 20-1/1983) (ASFV).